The chain runs to 318 residues: Aspartate carbamoyltransferase catalytic subunit (318 aa).

Positions 59 and 60 each coordinate carbamoyl phosphate. Lysine 87 provides a ligand contact to L-aspartate. Positions 109, 137, and 140 each coordinate carbamoyl phosphate. L-aspartate is bound by residues arginine 170 and arginine 224. Carbamoyl phosphate is bound by residues glycine 265 and proline 266.

It belongs to the aspartate/ornithine carbamoyltransferase superfamily. ATCase family. In terms of assembly, heterododecamer (2C3:3R2) of six catalytic PyrB chains organized as two trimers (C3), and six regulatory PyrI chains organized as three dimers (R2).

It carries out the reaction carbamoyl phosphate + L-aspartate = N-carbamoyl-L-aspartate + phosphate + H(+). It participates in pyrimidine metabolism; UMP biosynthesis via de novo pathway; (S)-dihydroorotate from bicarbonate: step 2/3. In terms of biological role, catalyzes the condensation of carbamoyl phosphate and aspartate to form carbamoyl aspartate and inorganic phosphate, the committed step in the de novo pyrimidine nucleotide biosynthesis pathway. This is Aspartate carbamoyltransferase catalytic subunit from Allorhizobium ampelinum (strain ATCC BAA-846 / DSM 112012 / S4) (Agrobacterium vitis (strain S4)).